The chain runs to 86 residues: UPF0297 protein SAHV_1604 (86 aa).

It belongs to the UPF0297 family.

The protein is UPF0297 protein SAHV_1604 of Staphylococcus aureus (strain Mu3 / ATCC 700698).